A 223-amino-acid polypeptide reads, in one-letter code: Probable tRNA-splicing endonuclease subunit tsp-1 (223 aa).

Positions 1 to 55 are disordered; it reads MESGSTPPTDKQIRENEQDGTGHQGKLLARPTSTRQQQQQQQQQPSHSVSQSVSQ. The span at 30 to 55 shows a compositional bias: low complexity; the sequence is RPTSTRQQQQQQQQQPSHSVSQSVSQ.

The protein belongs to the SEN15 family. TRNA splicing endonuclease is a heterotetramer composed of tsp-2/sen2, tsp-1/sen15, tsp-4/sen34 and tsp-5/sen54. Interacts directly with tsp-4/sen34.

Non-catalytic subunit of the tRNA-splicing endonuclease complex, a complex responsible for identification and cleavage of the splice sites in pre-tRNA. It cleaves pre-tRNA at the 5' and 3' splice sites to release the intron. The products are an intron and two tRNA half-molecules bearing 2',3' cyclic phosphate and 5'-OH termini. There are no conserved sequences at the splice sites, but the intron is invariably located at the same site in the gene, placing the splice sites an invariant distance from the constant structural features of the tRNA body. The sequence is that of Probable tRNA-splicing endonuclease subunit tsp-1 (tsp-1) from Neurospora crassa (strain ATCC 24698 / 74-OR23-1A / CBS 708.71 / DSM 1257 / FGSC 987).